The following is a 149-amino-acid chain: Transcriptional repressor NrdR (149 aa).

A zinc finger lies at 3–34; sequence CPFCGANDTKVIDSRLVADGHQVRRRRQCLAC. The ATP-cone domain occupies 49–139; that stretch reads PRVIKTDGNR…VYRSFEDIRE (91 aa).

This sequence belongs to the NrdR family. Zn(2+) serves as cofactor.

Its function is as follows. Negatively regulates transcription of bacterial ribonucleotide reductase nrd genes and operons by binding to NrdR-boxes. This is Transcriptional repressor NrdR from Photobacterium profundum (strain SS9).